The chain runs to 784 residues: DNA repair and recombination protein RAD54-like (784 aa).

The segment at 1-54 is disordered; sequence MRRSLAPSQRGPMRPESRHSFTPPLLKKNKRSCQQELEREQELDRKRQSALRDA. The tract at residues 2–9 is required for chromatin remodeling, strand pairing activities and coupling of ATPase activity; that stretch reads RRSLAPSQ. Ser-20 carries the post-translational modification Phosphoserine. Thr-22 bears the Phosphothreonine mark. The span at 36–47 shows a compositional bias: basic and acidic residues; that stretch reads ELEREQELDRKR. The Helicase ATP-binding domain occupies 172–346; it reads EGKRGNFNGC…YSLVNFVNPE (175 aa). 185-192 contacts ATP; the sequence is DEMGLGKT. A DEGH box motif is present at residues 297–300; that stretch reads DEGH. The 158-residue stretch at 503–660 folds into the Helicase C-terminal domain; sequence LLDFMLAAIR…NNESAEKHFT (158 aa). Residues 751 to 784 form a disordered region; it reads EEAASEQPEEKPDRRKRPSTPPSDDSADEDFLGF. Residues 775–784 show a composition bias toward acidic residues; sequence DSADEDFLGF.

The protein belongs to the SNF2/RAD54 helicase family. As to quaternary structure, interacts (via N-terminus) with spn-A/Rad51.

It is found in the nucleus. In terms of biological role, involved in mitotic DNA repair and meiotic recombination. Functions in the recombinational DNA repair pathway. Essential for interhomolog gene conversion (GC), but may have a less important role in intersister GC than spn-A/Rad51. In the presence of DNA, spn-A/Rad51 enhances the ATPase activity of okr/Rad54. This is DNA repair and recombination protein RAD54-like from Drosophila yakuba (Fruit fly).